The sequence spans 302 residues: Small ribosomal subunit protein uS2 (302 aa).

The segment at 275–302 (EGEGESEAEPVVAKKKPVRAKRPAVKAE) is disordered. Residues 287-302 (AKKKPVRAKRPAVKAE) are compositionally biased toward basic residues.

It belongs to the universal ribosomal protein uS2 family.

The sequence is that of Small ribosomal subunit protein uS2 from Opitutus terrae (strain DSM 11246 / JCM 15787 / PB90-1).